The following is a 444-amino-acid chain: Trigger factor (444 aa).

In terms of domain architecture, PPIase FKBP-type spans glycine 166–alanine 251.

The protein belongs to the FKBP-type PPIase family. Tig subfamily.

Its subcellular location is the cytoplasm. It carries out the reaction [protein]-peptidylproline (omega=180) = [protein]-peptidylproline (omega=0). Involved in protein export. Acts as a chaperone by maintaining the newly synthesized protein in an open conformation. Functions as a peptidyl-prolyl cis-trans isomerase. This Paracoccus denitrificans (strain Pd 1222) protein is Trigger factor.